The chain runs to 185 residues: ADP-ribosylation factor-like protein 2 (185 aa).

Residue glycine 2 is the site of N-myristoyl glycine attachment. Residues 23-30, 66-70, and 125-128 each bind GTP; these read GLDNSGKT, DVGGQ, and NKQD.

It belongs to the small GTPase superfamily. Arf family. Supercomplex made of cofactors A to E. Cofactors A and D function by capturing and stabilizing tubulin in a quasi-native conformation. Cofactor E binds to the cofactor D-tubulin complex; interaction with cofactor C then causes the release of tubulin polypeptides that are committed to the native state. Expressed in seedlings, leaves, roots and inflorescences.

It localises to the cytoplasm. Its function is as follows. Has a role in the cofactor-dependent pathway of microtubule biogenesis. Not essential for cell viability. May play a regulatory role in sequestring TFCD. The polypeptide is ADP-ribosylation factor-like protein 2 (ARL2) (Arabidopsis thaliana (Mouse-ear cress)).